A 614-amino-acid chain; its full sequence is Glucosidase 2 subunit beta (614 aa).

A signal peptide spans 1 to 20 (MGLHTLLLLLLLRISASAAA). An N-linked (GlcNAc...) asparagine glycan is attached at Asn115. Basic and acidic residues-rich tracts occupy residues 194–222 (EEER…KKAS), 231–272 (QENH…HDPE), and 324–351 (TGEK…HSEE). Residues 194-396 (EEERLRKEKE…SHESDDEYVD (203 aa)) are disordered. A compositionally biased stretch (acidic residues) spans 352–364 (THEDESDVPESAE). Residues 372 to 382 (SEVEDDRHKYD) are compositionally biased toward basic and acidic residues. Positions 383-396 (DEDFSHESDDEYVD) are enriched in acidic residues. Residues 497-592 (DQCFESKEGK…VLSTPALCDE (96 aa)) form the MRH domain. Cystine bridges form between Cys499–Cys512, Cys549–Cys578, and Cys563–Cys590.

As to quaternary structure, heterodimer of a catalytic alpha subunit and a beta subunit.

It is found in the endoplasmic reticulum. It participates in glycan metabolism; N-glycan metabolism. Regulatory subunit of glucosidase II. May be required for defense response elicited by pathogen-associated molecular patterns (PAMPs). This is Glucosidase 2 subunit beta from Oryza sativa subsp. indica (Rice).